Here is a 136-residue protein sequence, read N- to C-terminus: MNPIDPQVAPWEHPGAAPETPCTNCYCKKCCFHCPVCFTKKALGISYGRKRRGRKSAVHSTNNQDPVRQQSLPKRSRIQNSQEESQEEVEAETTSGGRPRQQDSSVSSGRTSGTSSSGYTRPFKTSSGSSGSACKH.

Residues 22–37 are cysteine-rich; it reads CTNCYCKKCCFHCPVC. The tract at residues 38-48 is core; sequence FTKKALGISYG. The segment covering 48–57 has biased composition (basic residues); that stretch reads GRKRRGRKSA. Positions 48–136 are disordered; sequence GRKRRGRKSA…SGSSGSACKH (89 aa). The Nuclear localization signal, and RNA-binding (TAR) motif lies at 49–55; sequence RKRRGRK. Polar residues predominate over residues 58–73; that stretch reads VHSTNNQDPVRQQSLP. Positions 104–120 are enriched in low complexity; sequence SSVSSGRTSGTSSSGYT. Residues 123–136 are compositionally biased toward polar residues; sequence FKTSSGSSGSACKH.

It belongs to the lentiviruses Tat family. Interacts with host CCNT1. Associates with the P-TEFb complex composed at least of Tat, P-TEFb (CDK9 and CCNT1), TAR RNA, RNA Pol II. Interacts with CCNT2; the resulting complex is unable to bind to TAR RNA.

It localises to the host nucleus. Its subcellular location is the host nucleolus. Its function is as follows. Transcriptional activator that increases RNA Pol II processivity, thereby increasing the level of full-length viral transcripts. Recognizes a hairpin structure at the 5'-LTR of the nascent viral mRNAs referred to as the transactivation responsive RNA element (TAR) and recruits the cyclin T1-CDK9 complex (P-TEFb complex) that will in turn hyperphosphorylate the RNA polymerase II to allow efficient elongation. The CDK9 component of P-TEFb and other Tat-activated kinases hyperphosphorylate the C-terminus of RNA Pol II that becomes stabilized and much more processive. In terms of biological role, extracellular circulating Tat can be endocytosed by surrounding uninfected cells via the binding to several surface receptors. Endosomal low pH allows Tat to cross the endosome membrane to enter the cytosol and eventually further translocate into the nucleus, thereby inducing severe cell dysfunctions ranging from cell activation to cell death. Through. This Simian immunodeficiency virus (isolate TAN1) (SIV-cpz) protein is Protein Tat.